Reading from the N-terminus, the 284-residue chain is 2-dehydro-3-deoxyphosphooctonate aldolase (284 aa).

It belongs to the KdsA family.

It localises to the cytoplasm. It catalyses the reaction D-arabinose 5-phosphate + phosphoenolpyruvate + H2O = 3-deoxy-alpha-D-manno-2-octulosonate-8-phosphate + phosphate. The protein operates within carbohydrate biosynthesis; 3-deoxy-D-manno-octulosonate biosynthesis; 3-deoxy-D-manno-octulosonate from D-ribulose 5-phosphate: step 2/3. Its pathway is bacterial outer membrane biogenesis; lipopolysaccharide biosynthesis. The polypeptide is 2-dehydro-3-deoxyphosphooctonate aldolase (Proteus mirabilis (strain HI4320)).